A 295-amino-acid polypeptide reads, in one-letter code: Small ribosomal subunit protein uS2 (295 aa).

This sequence belongs to the universal ribosomal protein uS2 family. Component of the small ribosomal subunit. Mature ribosomes consist of a small (40S) and a large (60S) subunit. The 40S subunit contains about 33 different proteins and 1 molecule of RNA (18S). The 60S subunit contains about 49 different proteins and 3 molecules of RNA (25S, 5.8S and 5S). Interacts with RPS21.

It localises to the cytoplasm. Functionally, required for the assembly and/or stability of the 40S ribosomal subunit. Required for the processing of the 20S rRNA-precursor to mature 18S rRNA in a late step of the maturation of 40S ribosomal subunits. This Paracoccidioides brasiliensis (strain Pb18) protein is Small ribosomal subunit protein uS2.